The primary structure comprises 314 residues: 3'-5' exoribonuclease YhaM (314 aa).

Residues 163–279 (HVVSMLDLAK…LHYIDNLDAK (117 aa)) form the HD domain.

Belongs to the YhaM family.

Its function is as follows. Shows a 3'-5' exoribonuclease activity. The protein is 3'-5' exoribonuclease YhaM of Bacillus mycoides (strain KBAB4) (Bacillus weihenstephanensis).